Here is a 370-residue protein sequence, read N- to C-terminus: Nematocyst expressed protein 4 (370 aa).

The signal sequence occupies residues 1 to 19; the sequence is MAWTLVLLVLLGTSSCLDA. The segment at 34–55 is disordered; the sequence is SGSGSGEEGSSGSGSAPEPVRD. Positions 36–45 are enriched in gly residues; that stretch reads SGSGEEGSSG. ShKT domains follow at residues 70 to 102, 113 to 149, and 155 to 190; these read CLDK…CRFC, CTDA…CKLC, and GKKF…CEVH. 8 cysteine pairs are disulfide-bonded: cysteine 70-cysteine 102, cysteine 77-cysteine 95, cysteine 84-cysteine 99, cysteine 113-cysteine 149, cysteine 121-cysteine 142, cysteine 131-cysteine 146, cysteine 164-cysteine 183, and cysteine 173-cysteine 187. Over residues 306–340 the composition is skewed to pro residues; the sequence is PYPPPPPPYPEQVPPPPPPPPPPPPPPPYPYPYPY. Residues 306–370 form a disordered region; it reads PYPPPPPPYP…HHKENHSKKS (65 aa). A compositionally biased stretch (basic residues) spans 349–370; sequence HKSKKHAKHHEKHHKENHSKKS.

This sequence belongs to the NEP3 family. In terms of tissue distribution, nematocytes. In late planulae, transcripts are found throughout the ectoderm in nematocytes, with high concentration of expressing cells in the oral pole. In primary polyps, is expressed in nematocytes in the body wall and physa ectoderm and in the upper and lower pharynx.

It localises to the nematocyst. Its subcellular location is the secreted. The protein is Nematocyst expressed protein 4 of Nematostella vectensis (Starlet sea anemone).